We begin with the raw amino-acid sequence, 146 residues long: PTS system fructose-specific EIIA component (146 aa).

The region spanning 1 to 124 (MISVIISGHG…NLKAMSQQSF (124 aa)) is the PTS EIIA type-4 domain. The active-site Tele-phosphohistidine intermediate is histidine 9. Histidine 9 is subject to Phosphohistidine; by HPr.

It is found in the cytoplasm. In terms of biological role, the phosphoenolpyruvate-dependent sugar phosphotransferase system (sugar PTS), a major carbohydrate active transport system, catalyzes the phosphorylation of incoming sugar substrates concomitantly with their translocation across the cell membrane. The enzyme II LevDE PTS system is involved in fructose transport. Functionally, levD and LevE act as negative regulators of the levanase operon. They may be involved in a PTS-mediated phosphorylation of a regulator. The polypeptide is PTS system fructose-specific EIIA component (Bacillus subtilis (strain 168)).